Here is a 270-residue protein sequence, read N- to C-terminus: Mediator of RNA polymerase II transcription subunit 4 (270 aa).

The interval 1–22 is disordered; it reads MAASSSGEKEKERMGGVSGMTG. Residue A2 is modified to N-acetylalanine. A coiled-coil region spans residues 26 to 131; the sequence is TRERLLSALE…ATAVYQAKEK (106 aa). Phosphoserine is present on S32. A disordered region spans residues 227–270; the sequence is MSVNMLPPNHSTDFLLEPPGHNKENEDDVEVMSTDSSSSSSDSD. Positions 259–270 are enriched in low complexity; that stretch reads STDSSSSSSDSD.

Belongs to the Mediator complex subunit 4 family. As to quaternary structure, component of the Mediator complex, which is composed of MED1, MED4, MED6, MED7, MED8, MED9, MED10, MED11, MED12, MED13, MED13L, MED14, MED15, MED16, MED17, MED18, MED19, MED20, MED21, MED22, MED23, MED24, MED25, MED26, MED27, MED29, MED30, MED31, CCNC, CDK8 and CDC2L6/CDK11. The MED12, MED13, CCNC and CDK8 subunits form a distinct module termed the CDK8 module. Mediator containing the CDK8 module is less active than Mediator lacking this module in supporting transcriptional activation. Individual preparations of the Mediator complex lacking one or more distinct subunits have been variously termed ARC, CRSP, DRIP, PC2, SMCC and TRAP.

The protein localises to the nucleus. In terms of biological role, component of the Mediator complex, a coactivator involved in the regulated transcription of nearly all RNA polymerase II-dependent genes. Mediator functions as a bridge to convey information from gene-specific regulatory proteins to the basal RNA polymerase II transcription machinery. Mediator is recruited to promoters by direct interactions with regulatory proteins and serves as a scaffold for the assembly of a functional preinitiation complex with RNA polymerase II and the general transcription factors. The polypeptide is Mediator of RNA polymerase II transcription subunit 4 (Med4) (Rattus norvegicus (Rat)).